We begin with the raw amino-acid sequence, 1240 residues long: RNA-directed RNA polymerase VP2 (1240 aa).

Positions 516 to 764 (LVANYINKHM…KLYALFGARI (249 aa)) constitute a RdRp catalytic domain.

Belongs to the reoviridae RNA-directed RNA polymerase family.

The protein localises to the virion. It catalyses the reaction RNA(n) + a ribonucleoside 5'-triphosphate = RNA(n+1) + diphosphate. In terms of biological role, RNA-directed RNA polymerase that is involved in transcription and genome replication. Following infection, it catalyzes the synthesis of fully conservative plus strands. After core assembly, which consists in recruitment of one capped plus-strand for each genomic segments and polymerase complexes, the polymerase switches mode and catalyzes the synthesis of complementary minus-strands. This chain is RNA-directed RNA polymerase VP2 (S2), found in Oncorhynchus keta (Chum salmon).